Here is a 175-residue protein sequence, read N- to C-terminus: NADH-ubiquinone oxidoreductase chain 6 (175 aa).

Helical transmembrane passes span 1 to 21 (MMTY…VSFS), 25 to 45 (SPIY…GIVL), 47 to 67 (FGGS…MLVV), 88 to 108 (AVLA…CYIL), and 149 to 169 (YGTW…LVIM).

The protein belongs to the complex I subunit 6 family. As to quaternary structure, core subunit of respiratory chain NADH dehydrogenase (Complex I) which is composed of 45 different subunits.

It localises to the mitochondrion inner membrane. It carries out the reaction a ubiquinone + NADH + 5 H(+)(in) = a ubiquinol + NAD(+) + 4 H(+)(out). Functionally, core subunit of the mitochondrial membrane respiratory chain NADH dehydrogenase (Complex I) which catalyzes electron transfer from NADH through the respiratory chain, using ubiquinone as an electron acceptor. Essential for the catalytic activity and assembly of complex I. The sequence is that of NADH-ubiquinone oxidoreductase chain 6 (MT-ND6) from Felis catus (Cat).